Consider the following 161-residue polypeptide: Putative sporulation sigma factor-processing peptidase (161 aa).

Residue D38 is part of the active site.

This sequence belongs to the peptidase U4 family.

Probably activates the RNA polymerase sigma-35 factor at the stage II of sporulation. This Bacillus thuringiensis subsp. kurstaki protein is Putative sporulation sigma factor-processing peptidase.